The chain runs to 141 residues: Probable spanin, inner membrane subunit (141 aa).

A helical; Signal-anchor for type II membrane protein membrane pass occupies residues 1-17 (MSRLMIVLVVLLSLAVA). The Periplasmic segment spans residues 18 to 141 (GLFLVKHKNA…ESEPLPDAGQ (124 aa)). Residues 119–141 (ACTDASDCPQRMPESEPLPDAGQ) form a disordered region.

Interacts (via C-terminus) with the spanin outer lipoprotein subunit (via C-terminus). Part of the spanin complex which spans the entire periplasmic space. The spanin complex is composed of spanin inner membrane subunit and spanin outer membrane subunit.

It is found in the host cell inner membrane. Functionally, component of the spanin complex that disrupts the host outer membrane and participates in cell lysis during virus exit. The spanin complex conducts the final step in host lysis by disrupting the outer membrane after holin and endolysin action have permeabilized the inner membrane and degraded the host peptidoglycans. Host outer membrane disruption is possibly due to local fusion between the inner and outer membrane performed by the spanin complex. This Escherichia phage P2 (Bacteriophage P2) protein is Probable spanin, inner membrane subunit (lysB).